Here is a 357-residue protein sequence, read N- to C-terminus: DENN domain-containing protein 10 (357 aa).

The uDENN domain occupies 1–140; it reads MAAAEVADTQ…TKGICQSEEN (140 aa). The region spanning 165–299 is the cDENN domain; it reads QFGMETVILH…PEKSESHVIQ (135 aa). The region spanning 301 to 357 is the dDENN domain; sequence IALKTREIFTNLAPFSEVSADGEKRVLNLEALKQKRFPPATENFLYHLAAAEQMLKI.

Belongs to the DENND10 family. In terms of assembly, interacts with the coiled-coil heterodimer of CCDC22 and CCDC93; the interaction is direct. Interacts with RAB27A and RAB27B (GDP-bound forms preferentially).

It is found in the late endosome. In terms of biological role, guanine nucleotide exchange factor (GEF) regulating homeostasis of late endocytic pathway, including endosomal positioning, maturation and secretion, possibly through activating Rab proteins such as RAB27A and RAB27B. Promotes the exchange of GDP to GTP, converting inactive GDP-bound RAB27A and RAB27B into their active GTP-bound form. The chain is DENN domain-containing protein 10 from Homo sapiens (Human).